Reading from the N-terminus, the 108-residue chain is Thiosulfate sulfurtransferase GlpE (108 aa).

In terms of domain architecture, Rhodanese spans 17–105 (QEKEAVLVDI…WQRQFPAEVA (89 aa)). C65 acts as the Cysteine persulfide intermediate in catalysis.

Belongs to the GlpE family.

It localises to the cytoplasm. It catalyses the reaction thiosulfate + hydrogen cyanide = thiocyanate + sulfite + 2 H(+). The enzyme catalyses thiosulfate + [thioredoxin]-dithiol = [thioredoxin]-disulfide + hydrogen sulfide + sulfite + 2 H(+). In terms of biological role, transferase that catalyzes the transfer of sulfur from thiosulfate to thiophilic acceptors such as cyanide or dithiols. May function in a CysM-independent thiosulfate assimilation pathway by catalyzing the conversion of thiosulfate to sulfite, which can then be used for L-cysteine biosynthesis. The chain is Thiosulfate sulfurtransferase GlpE from Escherichia coli O139:H28 (strain E24377A / ETEC).